The following is a 694-amino-acid chain: Elongation factor G 2 (694 aa).

The tr-type G domain maps to 6 to 282; it reads SKLRNIGISA…GVVDYLPDPT (277 aa). GTP is bound by residues 15-22, 82-86, and 136-139; these read AHIDSGKT, DTPGH, and NKCD.

Belongs to the TRAFAC class translation factor GTPase superfamily. Classic translation factor GTPase family. EF-G/EF-2 subfamily.

The protein localises to the cytoplasm. In terms of biological role, catalyzes the GTP-dependent ribosomal translocation step during translation elongation. During this step, the ribosome changes from the pre-translocational (PRE) to the post-translocational (POST) state as the newly formed A-site-bound peptidyl-tRNA and P-site-bound deacylated tRNA move to the P and E sites, respectively. Catalyzes the coordinated movement of the two tRNA molecules, the mRNA and conformational changes in the ribosome. This is Elongation factor G 2 from Anaeromyxobacter dehalogenans (strain 2CP-C).